A 256-amino-acid polypeptide reads, in one-letter code: Myb family transcription factor MPH1 (256 aa).

An HTH myb-type domain is found at 14-74 (RSEVPRMRWT…HLQMYRSGSS (61 aa)). Positions 45–70 (PKRILQLMGVKGVSISHIKSHLQMYR) form a DNA-binding region, H-T-H motif.

In terms of tissue distribution, highly expressed in the pulvinus and stem nodes. Expressed in the plumule of germinating seeds, coleoptile, leaves, internodes, leave sheaths, spikes and roots.

The protein localises to the nucleus. Probable transcription factor involved in the regulation of plant height by elongating internode cell length. Involved in the positive regulation of grain yield. May be involved in the regulation of genes related to cell elongation and cell wall synthesis, which are associated with plant height and yield phenotypes. Plays a role in tolerance to cadmium stress. The chain is Myb family transcription factor MPH1 from Oryza sativa subsp. japonica (Rice).